A 408-amino-acid polypeptide reads, in one-letter code: Aminopeptidase T (408 aa).

6 residues coordinate a divalent metal cation: glutamate 250, glutamate 316, glutamate 340, histidine 345, histidine 376, and aspartate 378.

Belongs to the peptidase M29 family. As to quaternary structure, homodimer. It depends on Co(2+) as a cofactor. Zn(2+) is required as a cofactor. The cofactor is Mg(2+).

Metal-dependent exopeptidase. This Thermus thermophilus (strain ATCC 27634 / DSM 579 / HB8) protein is Aminopeptidase T.